We begin with the raw amino-acid sequence, 238 residues long: Segregation and condensation protein A (238 aa).

This sequence belongs to the ScpA family. In terms of assembly, component of a cohesin-like complex composed of ScpA, ScpB and the Smc homodimer, in which ScpA and ScpB bind to the head domain of Smc. The presence of the three proteins is required for the association of the complex with DNA.

It localises to the cytoplasm. Participates in chromosomal partition during cell division. May act via the formation of a condensin-like complex containing Smc and ScpB that pull DNA away from mid-cell into both cell halves. The chain is Segregation and condensation protein A from Macrococcus caseolyticus (strain JCSC5402) (Macrococcoides caseolyticum).